The sequence spans 932 residues: Protein hir1 (932 aa).

7 WD repeats span residues 16 to 55 (GHRL…RENE), 72 to 111 (THTG…PGLG), 132 to 171 (GHDN…RLKR), 174 to 213 (AHQS…IEKT), 222 to 265 (PLST…SEIN), 268 to 316 (GHEG…PLLS), and 320 to 361 (VFQK…DMVS). 2 stretches are compositionally biased toward polar residues: residues 405 to 426 (STTD…QKTP) and 441 to 453 (TVDT…SKEQ). Disordered stretches follow at residues 405–470 (STTD…NEIP) and 498–520 (TPST…LPPQ). Over residues 498–507 (TPSTSRLAST) the composition is skewed to low complexity.

Belongs to the WD repeat HIR1 family. In terms of assembly, interacts with his3 and slm9.

It is found in the cytoplasm. The protein resides in the nucleus. Functionally, probably required for replication-independent chromatin assembly. Required for transcriptional silencing in the outer repeat (otr) centromeric repeats and the Tf2 long terminal repeat retrotransposons. Repressor of histone gene transcription in G1 arrested cells. Required for repression of htb1 gene expression outside of S phase. The chain is Protein hir1 (hip1) from Schizosaccharomyces pombe (strain 972 / ATCC 24843) (Fission yeast).